The following is a 555-amino-acid chain: Serine/threonine-protein kinase Nek4 (555 aa).

One can recognise a Protein kinase domain in the interval 4 to 258; it reads YEVLEQIGKG…ANELLNHPHL (255 aa). ATP contacts are provided by residues 10-18 and Lys33; that span reads IGKGSFGSA. The Proton acceptor role is filled by Asp129. Disordered stretches follow at residues 288–328, 346–372, and 443–477; these read LKER…MFNG, QRQE…KAST, and NRET…ITKD. Positions 304-320 are enriched in polar residues; the sequence is PSVSDTEAGSVSSSGKA.

It belongs to the protein kinase superfamily. NEK Ser/Thr protein kinase family. NIMA subfamily.

It carries out the reaction L-seryl-[protein] + ATP = O-phospho-L-seryl-[protein] + ADP + H(+). The enzyme catalyses L-threonyl-[protein] + ATP = O-phospho-L-threonyl-[protein] + ADP + H(+). Its function is as follows. May be involved in plant development processes. This Arabidopsis thaliana (Mouse-ear cress) protein is Serine/threonine-protein kinase Nek4 (NEK4).